Here is a 185-residue protein sequence, read N- to C-terminus: Elongation factor P (185 aa).

This sequence belongs to the elongation factor P family.

It is found in the cytoplasm. It functions in the pathway protein biosynthesis; polypeptide chain elongation. In terms of biological role, involved in peptide bond synthesis. Stimulates efficient translation and peptide-bond synthesis on native or reconstituted 70S ribosomes in vitro. Probably functions indirectly by altering the affinity of the ribosome for aminoacyl-tRNA, thus increasing their reactivity as acceptors for peptidyl transferase. The protein is Elongation factor P of Paraburkholderia xenovorans (strain LB400).